Here is a 447-residue protein sequence, read N- to C-terminus: Putative vacuolar cation/proton exchanger 4 (447 aa).

Residues 1–29 are disordered; it reads MDKSEMDKINGTNPESTDQAPSLASRPDE. The Cytoplasmic portion of the chain corresponds to 1-65; the sequence is MDKSEMDKIN…VNWGVFGSMK (65 aa). The span at 10–22 shows a compositional bias: polar residues; it reads NGTNPESTDQAPS. A helical transmembrane segment spans residues 66–86; it reads IVFLKSKLNVLIPCGFLAIFL. At 87–93 the chain is on the extracellular side; it reads NYMTQRY. A helical membrane pass occupies residues 94-114; it reads GWVFPLSMLGIIPLAERLGFA. Residues 115–122 are Cytoplasmic-facing; that stretch reads TDWQISCE. Residues 123 to 143 form a helical membrane-spanning segment; the sequence is VGRLLNSAFGNATELIISIHA. Residues 132–167 form a cation selection region; it reads GNATELIISIHALSRGKLHVVQQCLLGSILSNLLLV. Topologically, residues 144 to 159 are extracellular; the sequence is LSRGKLHVVQQCLLGS. A helical transmembrane segment spans residues 160–180; that stretch reads ILSNLLLVLGSAFFSGGLACG. Residues 181–190 are Cytoplasmic-facing; that stretch reads KTMQTFSKAD. The chain crosses the membrane as a helical span at residues 191–211; it reads AVVNSGLLLMAVMGLLIPAAL. The Extracellular portion of the chain corresponds to 212-224; sequence HYTHSEAQFGKSE. Residues 225–245 form a helical membrane-spanning segment; sequence LALSRFSSCIMLVAYASYLYF. The Cytoplasmic portion of the chain corresponds to 246–286; that stretch reads QLSNNRRRNEANVYPCMPLIKRRIQDDVDGNDDEVPEISKR. A helical transmembrane segment spans residues 287–307; that stretch reads EAISWIAIFIAWISMLSYYLV. Topologically, residues 308 to 318 are extracellular; it reads DAIDGASKAWN. The chain crosses the membrane as a helical span at residues 319–339; that stretch reads IPVAFISVVLLPVVGNSAGHA. Residues 333 to 368 are cation selection; it reads GNSAGHANAVMFAVKDKLDISLGVAIGSSIQISMFG. The Cytoplasmic portion of the chain corresponds to 340-353; the sequence is NAVMFAVKDKLDIS. The chain crosses the membrane as a helical span at residues 354 to 374; that stretch reads LGVAIGSSIQISMFGIPFCVV. Residues 375–384 are Extracellular-facing; sequence MGWMMGKPMD. The helical transmembrane segment at 385-405 threads the bilayer; sequence LNFHLFETASLLTTVLVVAFL. At 406-413 the chain is on the cytoplasmic side; sequence LQDGTSNC. The chain crosses the membrane as a helical span at residues 414–434; sequence VKGLMLFLCYLIVAASFYVHA. The Extracellular portion of the chain corresponds to 435 to 447; that stretch reads DPNSKASEKPPQN.

It belongs to the Ca(2+):cation antiporter (CaCA) (TC 2.A.19) family. Cation/proton exchanger (CAX) subfamily.

The protein localises to the vacuole membrane. In terms of biological role, vacuolar cation/proton exchanger (CAX). Translocates Ca(2+) and other metal ions into vacuoles using the proton gradient formed by H(+)-ATPase and H(+)-pyrophosphatase. The chain is Putative vacuolar cation/proton exchanger 4 from Oryza sativa subsp. japonica (Rice).